The primary structure comprises 351 residues: Nicotinate-nucleotide--dimethylbenzimidazole phosphoribosyltransferase (351 aa).

Residue Glu-313 is the Proton acceptor of the active site.

Belongs to the CobT family.

The catalysed reaction is 5,6-dimethylbenzimidazole + nicotinate beta-D-ribonucleotide = alpha-ribazole 5'-phosphate + nicotinate + H(+). It functions in the pathway nucleoside biosynthesis; alpha-ribazole biosynthesis; alpha-ribazole from 5,6-dimethylbenzimidazole: step 1/2. Its function is as follows. Catalyzes the synthesis of alpha-ribazole-5'-phosphate from nicotinate mononucleotide (NAMN) and 5,6-dimethylbenzimidazole (DMB). The sequence is that of Nicotinate-nucleotide--dimethylbenzimidazole phosphoribosyltransferase from Mycobacterium leprae (strain Br4923).